A 347-amino-acid polypeptide reads, in one-letter code: NADH-ubiquinone oxidoreductase chain 2 (347 aa).

10 helical membrane-spanning segments follow: residues 4–21 (LALI…VIVM), 26–44 (WLLV…IPVL), 59–79 (YFLT…TNLL), 93–115 (LAST…HFWV), 149–169 (LNLN…GWGG), 178–198 (ILAY…TYNP), 200–220 (LTLL…MLFM), 241–261 (ATSV…SGFL), 274–294 (ESIF…YFYM), and 323–343 (TPLL…APIL).

It belongs to the complex I subunit 2 family. As to quaternary structure, core subunit of respiratory chain NADH dehydrogenase (Complex I) which is composed of 45 different subunits. Interacts with TMEM242.

The protein localises to the mitochondrion inner membrane. It catalyses the reaction a ubiquinone + NADH + 5 H(+)(in) = a ubiquinol + NAD(+) + 4 H(+)(out). In terms of biological role, core subunit of the mitochondrial membrane respiratory chain NADH dehydrogenase (Complex I) which catalyzes electron transfer from NADH through the respiratory chain, using ubiquinone as an electron acceptor. Essential for the catalytic activity and assembly of complex I. This chain is NADH-ubiquinone oxidoreductase chain 2, found in Cardioderma cor (Heart-nosed bat).